A 418-amino-acid chain; its full sequence is Lactosylceramide alpha-2,3-sialyltransferase (418 aa).

The segment at 1-25 is disordered; that stretch reads MRTKAAGCAERRPLQPRTEAAAAPA. At 1 to 61 the chain is on the cytoplasmic side; that stretch reads MRTKAAGCAE…RAQSKMRRPS (61 aa). Residues 62-82 traverse the membrane as a helical; Signal-anchor for type II membrane protein segment; that stretch reads LLLKDILKCTLLVFGVWILYI. The Lumenal segment spans residues 83-418; it reads LKLNYTTEEC…DLSGGIDREF (336 aa). N-linked (GlcNAc...) asparagine glycans are attached at residues asparagine 86, asparagine 236, and asparagine 390. A disulfide bond links cysteine 195 and cysteine 353.

Belongs to the glycosyltransferase 29 family. N-glycosylated. As to expression, ubiquitous. High expression in brain, skeletal muscle, placenta, and testis. mRNA widely distributed in human brain, but slightly elevated expression was observed in the cerebral cortex, temporal lobe, and putamen.

The protein resides in the golgi apparatus membrane. The enzyme catalyses a beta-D-Gal-(1-&gt;4)-beta-D-Glc-(1&lt;-&gt;1)-Cer(d18:1(4E)) + CMP-N-acetyl-beta-neuraminate = a ganglioside GM3 (d18:1(4E)) + CMP + H(+). It catalyses the reaction ganglioside GA2 (d18:1(4E)/18:0) + CMP-N-acetyl-beta-neuraminate = ganglioside GM2 (d18:1(4E)/18:0) + CMP + H(+). The catalysed reaction is a beta-D-Gal-(1&lt;-&gt;1')-ceramide + CMP-N-acetyl-beta-neuraminate = N-acetyl-alpha-neuraminosyl-(2-&gt;3)-beta-D-galactosyl-(1&lt;-&gt;1')-ceramide + CMP + H(+). It carries out the reaction a beta-D-galactosyl-(1&lt;-&gt;1')-N-acylsphing-4-enine + CMP-N-acetyl-beta-neuraminate = a ganglioside GM4 (d18:1(4E)) + CMP + H(+). The enzyme catalyses ganglioside GA1 (d18:1(4E)/18:0) + CMP-N-acetyl-beta-neuraminate = ganglioside GM1 (d18:1(4E)/18:0) + CMP + H(+). It participates in glycolipid biosynthesis. Functionally, transfers the sialyl group (N-acetyl-alpha-neuraminyl or NeuAc) from CMP-NeuAc to the non-reducing terminal galactose (Gal) of glycosphingolipids forming gangliosides (important molecules involved in the regulation of multiple cellular processes, including cell proliferation and differentiation, apoptosis, embryogenesis, development, and oncogenesis). Mainly involved in the biosynthesis of ganglioside GM3 but can also use different glycolipids as substrate acceptors such as D-galactosylceramide (GalCer), asialo-GM2 (GA2) and asialo-GM1 (GA1), although less preferentially than beta-D-Gal-(1-&gt;4)-beta-D-Glc-(1&lt;-&gt;1)-Cer (LacCer). In Homo sapiens (Human), this protein is Lactosylceramide alpha-2,3-sialyltransferase (ST3GAL5).